The sequence spans 83 residues: Small ribosomal subunit protein bS18 (83 aa).

This sequence belongs to the bacterial ribosomal protein bS18 family. Part of the 30S ribosomal subunit. Forms a tight heterodimer with protein bS6.

Binds as a heterodimer with protein bS6 to the central domain of the 16S rRNA, where it helps stabilize the platform of the 30S subunit. This chain is Small ribosomal subunit protein bS18, found in Methylobacterium sp. (strain 4-46).